A 225-amino-acid polypeptide reads, in one-letter code: MPAQPLRDILEPGWAKALEPMADRIAAMGDFLRAEIAAGRSYLPAGQHVLRAFQQPFDDVRVLIVGQDPYPTPGMAIGYSFAVAPEVRRLPGSLENIFQELCADLSVPRPTNGDLTPWTRQGVLLLNRVLTTAPRQPGAHRGKGWEEVTEQAIRALAARGTPLVAILWGADARSLRPFLSPAPTIESAHPSPRSADRGFFGSRPFSRANNHLLEQGAQPVDWHLP.

Asp-68 (proton acceptor) is an active-site residue.

The protein belongs to the uracil-DNA glycosylase (UDG) superfamily. UNG family.

It is found in the cytoplasm. It carries out the reaction Hydrolyzes single-stranded DNA or mismatched double-stranded DNA and polynucleotides, releasing free uracil.. Excises uracil residues from the DNA which can arise as a result of misincorporation of dUMP residues by DNA polymerase or due to deamination of cytosine. This chain is Uracil-DNA glycosylase, found in Parafrankia sp. (strain EAN1pec).